The following is a 365-amino-acid chain: Protein BZR1 homolog 2 (365 aa).

The span at 1 to 30 (MATGGGGGGGGMGGGGVGGGAGAAGVGVGG) shows a compositional bias: gly residues. 4 disordered regions span residues 1 to 45 (MATG…KRRE), 113 to 154 (SPSP…NMAN), 191 to 236 (SAPV…TPPS), and 344 to 365 (HEDSGSDDLELTLGSSRTRAAA). The required for DNA-binding stretch occupies residues 31–113 (RMPTWREREN…RMEVIGCSVS (83 aa)). The segment covering 113–144 (SPSPCSSYQPSPRASYNASPTSSSFPSGASSP) has biased composition (low complexity). 2 stretches are compositionally biased toward polar residues: residues 215–233 (SNVQPTWTGSNSPCVVNST) and 356–365 (LGSSRTRAAA).

Belongs to the BZR/LAT61 family. As to quaternary structure, interacts with PUB24.

May function in brassinosteroid signaling. This chain is Protein BZR1 homolog 2, found in Oryza sativa subsp. japonica (Rice).